A 146-amino-acid chain; its full sequence is Phospho-2-dehydro-3-deoxyheptonate aldolase (146 aa).

It belongs to the class-II DAHP synthase family. As to quaternary structure, homodimer.

The catalysed reaction is D-erythrose 4-phosphate + phosphoenolpyruvate + H2O = 7-phospho-2-dehydro-3-deoxy-D-arabino-heptonate + phosphate. The protein operates within metabolic intermediate biosynthesis; chorismate biosynthesis; chorismate from D-erythrose 4-phosphate and phosphoenolpyruvate: step 1/7. In Streptomyces lividans, this protein is Phospho-2-dehydro-3-deoxyheptonate aldolase.